A 61-amino-acid polypeptide reads, in one-letter code: Small ribosomal subunit protein uS14 (61 aa).

Residues Cys24, Cys27, Cys40, and Cys43 each contribute to the Zn(2+) site.

Belongs to the universal ribosomal protein uS14 family. Zinc-binding uS14 subfamily. In terms of assembly, part of the 30S ribosomal subunit. Contacts proteins S3 and S10. The cofactor is Zn(2+).

In terms of biological role, binds 16S rRNA, required for the assembly of 30S particles and may also be responsible for determining the conformation of the 16S rRNA at the A site. This is Small ribosomal subunit protein uS14 from Fervidobacterium nodosum (strain ATCC 35602 / DSM 5306 / Rt17-B1).